A 414-amino-acid polypeptide reads, in one-letter code: Arrestin domain-containing protein 3 (414 aa).

2 consecutive short sequence motifs (PPxY motif) follow at residues 346–349 and 391–394; these read PPSY and PPLY. A disordered region spans residues 393–414; sequence LYSEIDPNPDQPADDRPSCPSR. Residues 405–414 show a composition bias toward basic and acidic residues; it reads ADDRPSCPSR.

The protein belongs to the arrestin family. In terms of assembly, interacts (via PPxY motifs) with NEDD4 (via WW domains). Interacts with ADRB2. Interacts with ADRB3. Interacts with HGS (via PPxY motifs). Does not bind TXN (thioredoxin). Interacts with ITCH.

It localises to the cytoplasm. It is found in the cell membrane. The protein resides in the lysosome. Its subcellular location is the endosome. The protein localises to the early endosome. Its function is as follows. Adapter protein that plays a role in regulating cell-surface expression of adrenergic receptors and probably also other G protein-coupled receptors. Plays a role in NEDD4-mediated ubiquitination and endocytosis af activated ADRB2 and subsequent ADRB2 degradation. May recruit NEDD4 to ADRB2. Alternatively, may function as adapter protein that does not play a major role in recruiting NEDD4 to ADRB2, but rather plays a role in a targeting ADRB2 to endosomes. The polypeptide is Arrestin domain-containing protein 3 (ARRDC3) (Bos taurus (Bovine)).